The following is a 503-amino-acid chain: Cytochrome P450 6l1 (503 aa).

Cys-438 contributes to the heme binding site.

Belongs to the cytochrome P450 family. The cofactor is heme. As to expression, detected only in testes and accessory glands of male adults.

The protein resides in the endoplasmic reticulum membrane. The protein localises to the microsome membrane. The sequence is that of Cytochrome P450 6l1 (CYP6L1) from Blattella germanica (German cockroach).